The following is a 205-amino-acid chain: Methylthioribulose-1-phosphate dehydratase (205 aa).

2 residues coordinate Zn(2+): His96 and His98.

It belongs to the aldolase class II family. MtnB subfamily. Zn(2+) is required as a cofactor.

The catalysed reaction is 5-(methylsulfanyl)-D-ribulose 1-phosphate = 5-methylsulfanyl-2,3-dioxopentyl phosphate + H2O. The protein operates within amino-acid biosynthesis; L-methionine biosynthesis via salvage pathway; L-methionine from S-methyl-5-thio-alpha-D-ribose 1-phosphate: step 2/6. In terms of biological role, catalyzes the dehydration of methylthioribulose-1-phosphate (MTRu-1-P) into 2,3-diketo-5-methylthiopentyl-1-phosphate (DK-MTP-1-P). The polypeptide is Methylthioribulose-1-phosphate dehydratase (Exiguobacterium sp. (strain ATCC BAA-1283 / AT1b)).